Reading from the N-terminus, the 172-residue chain is Large ribosomal subunit protein uL10 (172 aa).

The protein belongs to the universal ribosomal protein uL10 family. In terms of assembly, part of the ribosomal stalk of the 50S ribosomal subunit. The N-terminus interacts with L11 and the large rRNA to form the base of the stalk. The C-terminus forms an elongated spine to which L12 dimers bind in a sequential fashion forming a multimeric L10(L12)X complex.

Its function is as follows. Forms part of the ribosomal stalk, playing a central role in the interaction of the ribosome with GTP-bound translation factors. In Chlamydia trachomatis serovar L2 (strain ATCC VR-902B / DSM 19102 / 434/Bu), this protein is Large ribosomal subunit protein uL10.